The primary structure comprises 452 residues: Bifunctional protein GlmU (452 aa).

The interval M1 to R232 is pyrophosphorylase. UDP-N-acetyl-alpha-D-glucosamine is bound by residues L11–G14, K25, Q78, and G83–T84. Residue D108 coordinates Mg(2+). UDP-N-acetyl-alpha-D-glucosamine is bound by residues G144, E158, and N230. N230 serves as a coordination point for Mg(2+). A linker region spans residues A233–G253. An N-acetyltransferase region spans residues G254–E452. UDP-N-acetyl-alpha-D-glucosamine-binding residues include R319 and K337. Residue H349 is the Proton acceptor of the active site. UDP-N-acetyl-alpha-D-glucosamine is bound by residues Y352 and N363. Residues A366, N372 to Y373, S391, S409, and R426 contribute to the acetyl-CoA site.

In the N-terminal section; belongs to the N-acetylglucosamine-1-phosphate uridyltransferase family. This sequence in the C-terminal section; belongs to the transferase hexapeptide repeat family. Homotrimer. The cofactor is Mg(2+).

It localises to the cytoplasm. It catalyses the reaction alpha-D-glucosamine 1-phosphate + acetyl-CoA = N-acetyl-alpha-D-glucosamine 1-phosphate + CoA + H(+). The catalysed reaction is N-acetyl-alpha-D-glucosamine 1-phosphate + UTP + H(+) = UDP-N-acetyl-alpha-D-glucosamine + diphosphate. Its pathway is nucleotide-sugar biosynthesis; UDP-N-acetyl-alpha-D-glucosamine biosynthesis; N-acetyl-alpha-D-glucosamine 1-phosphate from alpha-D-glucosamine 6-phosphate (route II): step 2/2. It participates in nucleotide-sugar biosynthesis; UDP-N-acetyl-alpha-D-glucosamine biosynthesis; UDP-N-acetyl-alpha-D-glucosamine from N-acetyl-alpha-D-glucosamine 1-phosphate: step 1/1. It functions in the pathway bacterial outer membrane biogenesis; LPS lipid A biosynthesis. Its function is as follows. Catalyzes the last two sequential reactions in the de novo biosynthetic pathway for UDP-N-acetylglucosamine (UDP-GlcNAc). The C-terminal domain catalyzes the transfer of acetyl group from acetyl coenzyme A to glucosamine-1-phosphate (GlcN-1-P) to produce N-acetylglucosamine-1-phosphate (GlcNAc-1-P), which is converted into UDP-GlcNAc by the transfer of uridine 5-monophosphate (from uridine 5-triphosphate), a reaction catalyzed by the N-terminal domain. This is Bifunctional protein GlmU from Parvibaculum lavamentivorans (strain DS-1 / DSM 13023 / NCIMB 13966).